The sequence spans 101 residues: Small ribosomal subunit protein uS10 (101 aa).

The protein belongs to the universal ribosomal protein uS10 family. As to quaternary structure, part of the 30S ribosomal subunit.

Functionally, involved in the binding of tRNA to the ribosomes. This Brachyspira hyodysenteriae (Treponema hyodysenteriae) protein is Small ribosomal subunit protein uS10.